We begin with the raw amino-acid sequence, 390 residues long: GTPase Obg (390 aa).

One can recognise an Obg domain in the interval 1 to 159; the sequence is MKFVDEASIL…RELLLELMLL (159 aa). Residues 127–147 form a disordered region; that stretch reads NTRFKSSVNRTPRQKTNGTPG. Over residues 129–145 the composition is skewed to polar residues; it reads RFKSSVNRTPRQKTNGT. One can recognise an OBG-type G domain in the interval 160–333; sequence ADVGMLGMPN…LCWDVMTFIL (174 aa). GTP contacts are provided by residues 166–173, 191–195, 213–216, 283–286, and 314–316; these read GMPNAGKS, FTTLV, DIPG, NKID, and SAA. 2 residues coordinate Mg(2+): Ser-173 and Thr-193.

The protein belongs to the TRAFAC class OBG-HflX-like GTPase superfamily. OBG GTPase family. As to quaternary structure, monomer. Requires Mg(2+) as cofactor.

Its subcellular location is the cytoplasm. An essential GTPase which binds GTP, GDP and possibly (p)ppGpp with moderate affinity, with high nucleotide exchange rates and a fairly low GTP hydrolysis rate. Plays a role in control of the cell cycle, stress response, ribosome biogenesis and in those bacteria that undergo differentiation, in morphogenesis control. The protein is GTPase Obg of Shigella sonnei (strain Ss046).